Reading from the N-terminus, the 205-residue chain is Large ribosomal subunit protein uL3 (205 aa).

Belongs to the universal ribosomal protein uL3 family. As to quaternary structure, part of the 50S ribosomal subunit. Forms a cluster with proteins L14 and L19.

Functionally, one of the primary rRNA binding proteins, it binds directly near the 3'-end of the 23S rRNA, where it nucleates assembly of the 50S subunit. The chain is Large ribosomal subunit protein uL3 from Bacteroides thetaiotaomicron (strain ATCC 29148 / DSM 2079 / JCM 5827 / CCUG 10774 / NCTC 10582 / VPI-5482 / E50).